The chain runs to 412 residues: Subtilisin-like protease 6 (412 aa).

Positions 1 to 20 (MGFITKAIPIVLAALSTVNG) are cleaved as a signal peptide. The propeptide occupies 21-126 (ARILEAGPHA…VVRTTTNGTN (106 aa)). The Inhibitor I9 domain maps to 36–120 (KYIVVMKREV…FIEPDFVVRT (85 aa)). N-linked (GlcNAc...) asparagine glycosylation is found at N123 and N126. Positions 135 to 412 (SWGLARVGSK…GKLIYNGSGK (278 aa)) constitute a Peptidase S8 domain. Active-site charge relay system residues include D167 and H198. N-linked (GlcNAc...) asparagine glycosylation is found at N252 and N264. The active-site Charge relay system is the S358. N408 carries an N-linked (GlcNAc...) asparagine glycan.

This sequence belongs to the peptidase S8 family.

The protein resides in the secreted. Functionally, secreted subtilisin-like serine protease with keratinolytic activity that contributes to pathogenicity. The polypeptide is Subtilisin-like protease 6 (SUB6) (Trichophyton rubrum (Athlete's foot fungus)).